We begin with the raw amino-acid sequence, 365 residues long: MAVMAPRTLVLLLSGALALTQTWAGSHSMRYFSTSVSRPGRGEPRFIAVGYVDDTQFVRFDSDAASQRMEPRAPWIEQEGPEYWDEETRSVKASAQTDRVDLGTLRGYYNQSEDGSHTIQLMFGCDVGSDGRFLRGYRQDAYDGKDYIALNEDLRSWTAADMAAQITQRKWEAAHAAEQLRAYLEGTCVEWLRRYLENGKETLQRTDPPKTHMTHHPISDREATLRCWALGFYPAEITLTWQRDGEDQTQDTELVETRPAGDGTFQKWAAVVVPSGEEQRYTCHVQHEGLPKPLTLRWEPSSQPTIPIVGIIAGLVLLGAVITGAVVAAVMWRRKSSDRKGGSYSQAASSDSAQGSDVSLTACKV.

The N-terminal stretch at 1-24 (MAVMAPRTLVLLLSGALALTQTWA) is a signal peptide. Residues 25 to 114 (GSHSMRYFST…LRGYYNQSED (90 aa)) are alpha-1. Topologically, residues 25-308 (GSHSMRYFST…EPSSQPTIPI (284 aa)) are extracellular. Asn110 carries an N-linked (GlcNAc...) asparagine glycan. The tract at residues 115-206 (GSHTIQLMFG…ENGKETLQRT (92 aa)) is alpha-2. Disulfide bonds link Cys125/Cys188 and Cys227/Cys283. Residues 207 to 298 (DPPKTHMTHH…GLPKPLTLRW (92 aa)) are alpha-3. Positions 209 to 295 (PKTHMTHHPI…QHEGLPKPLT (87 aa)) constitute an Ig-like C1-type domain. The interval 299–308 (EPSSQPTIPI) is connecting peptide. Residues 309 to 332 (VGIIAGLVLLGAVITGAVVAAVMW) form a helical membrane-spanning segment. Residues 333-365 (RRKSSDRKGGSYSQAASSDSAQGSDVSLTACKV) lie on the Cytoplasmic side of the membrane. Residues 338 to 365 (DRKGGSYSQAASSDSAQGSDVSLTACKV) form a disordered region. Over residues 342–359 (GSYSQAASSDSAQGSDVS) the composition is skewed to low complexity. Ser343 is modified (phosphoserine). The residue at position 344 (Tyr344) is a Phosphotyrosine. Residues Ser345, Ser349, Ser352, Ser356, and Ser359 each carry the phosphoserine modification.

Belongs to the MHC class I family. In terms of assembly, heterodimer of an alpha chain and a beta chain (beta-2-microglobulin).

It is found in the membrane. Involved in the presentation of foreign antigens to the immune system. The chain is Patr class I histocompatibility antigen, A-126 alpha chain (Patr-A) from Pan troglodytes (Chimpanzee).